Reading from the N-terminus, the 336-residue chain is 4-hydroxy-3-methylbut-2-enyl diphosphate reductase (336 aa).

Cysteine 37 is a binding site for [4Fe-4S] cluster. Positions 66 and 99 each coordinate (2E)-4-hydroxy-3-methylbut-2-enyl diphosphate. Residues histidine 66 and histidine 99 each coordinate dimethylallyl diphosphate. Histidine 66 and histidine 99 together coordinate isopentenyl diphosphate. Cysteine 121 provides a ligand contact to [4Fe-4S] cluster. Histidine 149 contributes to the (2E)-4-hydroxy-3-methylbut-2-enyl diphosphate binding site. Histidine 149 is a dimethylallyl diphosphate binding site. Histidine 149 provides a ligand contact to isopentenyl diphosphate. The Proton donor role is filled by glutamate 151. Threonine 189 lines the (2E)-4-hydroxy-3-methylbut-2-enyl diphosphate pocket. Cysteine 219 provides a ligand contact to [4Fe-4S] cluster. (2E)-4-hydroxy-3-methylbut-2-enyl diphosphate-binding residues include serine 247, serine 248, asparagine 249, and serine 292. Residues serine 247, serine 248, asparagine 249, and serine 292 each coordinate dimethylallyl diphosphate. Isopentenyl diphosphate-binding residues include serine 247, serine 248, asparagine 249, and serine 292.

The protein belongs to the IspH family. [4Fe-4S] cluster serves as cofactor.

It catalyses the reaction isopentenyl diphosphate + 2 oxidized [2Fe-2S]-[ferredoxin] + H2O = (2E)-4-hydroxy-3-methylbut-2-enyl diphosphate + 2 reduced [2Fe-2S]-[ferredoxin] + 2 H(+). The enzyme catalyses dimethylallyl diphosphate + 2 oxidized [2Fe-2S]-[ferredoxin] + H2O = (2E)-4-hydroxy-3-methylbut-2-enyl diphosphate + 2 reduced [2Fe-2S]-[ferredoxin] + 2 H(+). Its pathway is isoprenoid biosynthesis; dimethylallyl diphosphate biosynthesis; dimethylallyl diphosphate from (2E)-4-hydroxy-3-methylbutenyl diphosphate: step 1/1. It participates in isoprenoid biosynthesis; isopentenyl diphosphate biosynthesis via DXP pathway; isopentenyl diphosphate from 1-deoxy-D-xylulose 5-phosphate: step 6/6. Its function is as follows. Catalyzes the conversion of 1-hydroxy-2-methyl-2-(E)-butenyl 4-diphosphate (HMBPP) into a mixture of isopentenyl diphosphate (IPP) and dimethylallyl diphosphate (DMAPP). Acts in the terminal step of the DOXP/MEP pathway for isoprenoid precursor biosynthesis. In Rhodococcus jostii (strain RHA1), this protein is 4-hydroxy-3-methylbut-2-enyl diphosphate reductase.